The chain runs to 490 residues: CUGBP Elav-like family member 1 (490 aa).

RRM domains are found at residues 16-99 (IKMF…PADS) and 108-188 (RKLF…FADT). A disordered region spans residues 283 to 312 (PSAGSALTTSSSPLSILTSSGSSPSSNNNS). The region spanning 405–483 (ANLFIYHLPQ…KRLKVQLKRS (79 aa)) is the RRM 3 domain.

Belongs to the CELF/BRUNOL family. Oligomer. Oligomerization is required for RNA-binding and EDEN-dependent deadenylation. Phosphorylated during oocyte maturation and dephosphorylated following egg activation. Dephosphorylation is calcium dependent and correlates with the increase in the activity of EDEN-dependent deadenylation.

Its subcellular location is the nucleus. The protein localises to the cytoplasm. In terms of biological role, RNA-binding protein implicated in the regulation of several post-transcriptional events. May be involved in pre-mRNA alternative splicing, mRNA translation activation and stability. Mediates the rapid and sequence-specific cytoplasmic deadenylation of EDEN-containing maternal mRNAs following fertilization. Binds to AU-rich sequences (AREs) of jun mRNA. Binds to the embryonic deadenylation element (EDEN) motif localized in the 3'-UTR of maternal mRNAs. Binds to RNA containing several repeats of the consensus sequence 5'-UGU-3'. EDEN-dependent deadenylation is enhanced by the presence of an additional cis element composed of three AUU repeats. The protein is CUGBP Elav-like family member 1 (celf1) of Xenopus tropicalis (Western clawed frog).